A 340-amino-acid polypeptide reads, in one-letter code: MGKSLLAAYGLWALGGPLGLYHIYLGRDSHALLWMLTLGGFGMGWMWDFWKIPIHVYKYNRQERKNIEVKEGEPPASPIRFIGQVATGIYFGIVAAIGLSFLSSFHMVVLPLAVALGVHLVATVGEQTSDLKNTLIAAFLTSPIFYGRAVSMIPISLTASITSQKHMRYRLQQEKQEKLSLRLYRIGLVYLAFTGPLAYSALLNTSLTVSYVAGSIGSMLEWLSIFPSISALVERLLLLPYRVWAVFSGGGVFRDHYFKEWEKIYEFVATFQSEKEEMACKVLGVNFKSTMEEINRKYRELVKIWHPDHNRHRLEEAQEHFLEIQAAYETLMRLRKSKTL.

The 50-residue stretch at 1 to 50 folds into the TM2 domain; sequence MGKSLLAAYGLWALGGPLGLYHIYLGRDSHALLWMLTLGGFGMGWMWDFW. Transmembrane regions (helical) follow at residues 5–25, 30–50, 81–101, 105–125, 135–155, 186–206, and 212–232; these read LLAAYGLWALGGPLGLYHIYL, HALLWMLTLGGFGMGWMWDFW, FIGQVATGIYFGIVAAIGLSF, FHMVVLPLAVALGVHLVATVG, LIAAFLTSPIFYGRAVSMIPI, IGLVYLAFTGPLAYSALLNTS, and VAGSIGSMLEWLSIFPSISAL. The J domain occupies 278–340; sequence MACKVLGVNF…LMRLRKSKTL (63 aa).

It localises to the membrane. May function as a co-chaperone. The chain is DnaJ homolog subfamily C member 22 (dnajc22) from Xenopus tropicalis (Western clawed frog).